The sequence spans 137 residues: Beta-synuclein (137 aa).

2 tandem repeats follow at residues 20 to 30 (EKTKQGVTEAA) and 31 to 41 (EKTKEGVLYVG). Residues 20–67 (EKTKQGVTEAAEKTKEGVLYVGSKTKEGVVQGVASVAEKTKEQASHLG) are 4 X 11 AA tandem repeats of [EGS]-K-T-K-[EQ]-[GQ]-V-X(4). The stretch at 42 to 56 (SKTKEGVVQGVASVA) is one 3; approximate repeat. Repeat 4 spans residues 57–67 (EKTKEQASHLG). Positions 88 to 97 (EFPTDLKPEE) are enriched in basic and acidic residues. A disordered region spans residues 88-137 (EFPTDLKPEEVAQEAAEEPLIEPLMEPEGESYEDSPQEEYQEYEPEAKGP). Residues 98–131 (VAQEAAEEPLIEPLMEPEGESYEDSPQEEYQEYE) show a composition bias toward acidic residues. A Phosphoserine; by BARK1, CK2 and GRK5 modification is found at serine 118.

The protein belongs to the synuclein family. Phosphorylated. Phosphorylation by G-protein coupled receptor kinases (GRK) is more efficient than phosphorylation by CK1, CK2 and CaM-kinase II. As to expression, expressed specifically in brain.

The protein resides in the cytoplasm. Functionally, may be involved in neuronal plasticity. The sequence is that of Beta-synuclein (Sncb) from Rattus norvegicus (Rat).